Consider the following 225-residue polypeptide: Lipoprotein-releasing system ATP-binding protein LolD (225 aa).

The region spanning 5–225 is the ABC transporter domain; the sequence is LEVMDLTKGY…RLVDGRVVAD (221 aa). Residue 41–48 coordinates ATP; it reads GASGTGKS.

Belongs to the ABC transporter superfamily. Lipoprotein translocase (TC 3.A.1.125) family. In terms of assembly, the complex is composed of two ATP-binding proteins (LolD) and two transmembrane proteins (LolC and LolE).

It is found in the cell inner membrane. Functionally, part of the ABC transporter complex LolCDE involved in the translocation of mature outer membrane-directed lipoproteins, from the inner membrane to the periplasmic chaperone, LolA. Responsible for the formation of the LolA-lipoprotein complex in an ATP-dependent manner. The polypeptide is Lipoprotein-releasing system ATP-binding protein LolD (Geobacter metallireducens (strain ATCC 53774 / DSM 7210 / GS-15)).